Here is a 400-residue protein sequence, read N- to C-terminus: Transcription initiation factor IIF subunit beta (400 aa).

The segment covering 1–19 (MSSGSAGAPALSNNSTNSV) has biased composition (polar residues). A disordered region spans residues 1–47 (MSSGSAGAPALSNNSTNSVAKEKSGNISGDEYLSQEEEVFDGNDIEN). Phosphoserine is present on residues Ser28, Ser34, and Ser56. The span at 33-47 (LSQEEEVFDGNDIEN) shows a compositional bias: acidic residues. Disordered regions lie at residues 165 to 194 (QERE…VMTD) and 366 to 400 (TLGE…EDVV). A compositionally biased stretch (basic residues) spans 174–189 (KQQQQKRRNNRKKFNH). Residues 386–400 (AEADLEDEIEMEDVV) are compositionally biased toward acidic residues.

This sequence belongs to the TFIIF beta subunit family. As to quaternary structure, TFIIF is composed of three different subunits: TFG1/RAP74, TFG2/RAP30 and TAF14.

It is found in the nucleus. In terms of biological role, TFIIF is a general transcription initiation factor that binds to RNA polymerase II. Its functions include the recruitment of RNA polymerase II to the promoter bound DNA-TBP-TFIIB complex, decreasing the affinity of RNA polymerase II for non-specific DNA, allowing for the subsequent recruitment of TFIIE and TFIIH, and facilitating RNA polymerase II elongation. The chain is Transcription initiation factor IIF subunit beta (TFG2) from Saccharomyces cerevisiae (strain ATCC 204508 / S288c) (Baker's yeast).